A 223-amino-acid polypeptide reads, in one-letter code: MAGKPKLHYFNGRGRMECIRWLLAAAGVEFEEKFIEQPEDLDKLRNDGSLMFQQVPMVEIDGMKLVQTRAILNYIATKYNLYGKDMKERALIDMYSEGVEDLGEMIMHLPLCPPDQKDAKIAQIKERTTNRYFPAFEKVLKNHGQDYLVGNKLSKADIHLVELLYYVEELDPSLLANFPLLKGLKARVSSLPAVKKFLQPGSQRKPPMDEKNLEEAKRIFRIK.

At Ala-2 the chain carries N-acetylalanine. In terms of domain architecture, GST N-terminal spans 3 to 83 (GKPKLHYFNG…YIATKYNLYG (81 aa)). Lys-4 carries the N6-succinyllysine modification. Glutathione is bound by residues Tyr-9, Arg-45, 54-55 (QV), and 67-68 (QT). The 124-residue stretch at 85–208 (DMKERALIDM…QPGSQRKPPM (124 aa)) folds into the GST C-terminal domain.

This sequence belongs to the GST superfamily. Alpha family. In terms of assembly, homodimer. As to expression, expressed in corpus luteum, adrenal gland, testis, liver, lung, thyroid and kidney.

The protein localises to the cytoplasm. The enzyme catalyses RX + glutathione = an S-substituted glutathione + a halide anion + H(+). Functionally, conjugation of reduced glutathione to a wide number of exogenous and endogenous hydrophobic electrophiles. In Bos taurus (Bovine), this protein is Glutathione S-transferase A2 (GSTA2).